The primary structure comprises 335 residues: Glycerol-3-phosphate dehydrogenase [NAD(P)+] (335 aa).

Lys109 lines the NADPH pocket. Positions 109, 141, and 143 each coordinate sn-glycerol 3-phosphate. Residue Ala145 participates in NADPH binding. 5 residues coordinate sn-glycerol 3-phosphate: Lys196, Asp249, Ser259, Arg260, and Asn261. The active-site Proton acceptor is the Lys196. Arg260 provides a ligand contact to NADPH. An NADPH-binding site is contributed by Glu283.

This sequence belongs to the NAD-dependent glycerol-3-phosphate dehydrogenase family.

The protein resides in the cytoplasm. It carries out the reaction sn-glycerol 3-phosphate + NAD(+) = dihydroxyacetone phosphate + NADH + H(+). The catalysed reaction is sn-glycerol 3-phosphate + NADP(+) = dihydroxyacetone phosphate + NADPH + H(+). Its pathway is membrane lipid metabolism; glycerophospholipid metabolism. In terms of biological role, catalyzes the reduction of the glycolytic intermediate dihydroxyacetone phosphate (DHAP) to sn-glycerol 3-phosphate (G3P), the key precursor for phospholipid synthesis. This chain is Glycerol-3-phosphate dehydrogenase [NAD(P)+], found in Mycoplasma mobile (strain ATCC 43663 / 163K / NCTC 11711) (Mesomycoplasma mobile).